The primary structure comprises 308 residues: 1,4-dihydroxy-2-naphthoate octaprenyltransferase (308 aa).

Residues 1–20 (MTEQQISRTQAWLESLRPKT) lie on the Cytoplasmic side of the membrane. The helical transmembrane segment at 21–41 (LPLAFAAIIVGTALAWWQGHF) threads the bilayer. Position 42 (Asp42) is a topological domain, periplasmic. Residues 43-63 (PLVALLALITAGLLQILSNLA) form a helical membrane-spanning segment. Topologically, residues 64–97 (NDYGDAVKGSDKPDRIGPLRGMQKGVITQQEMKR) are cytoplasmic. The helical transmembrane segment at 98–118 (ALIITVVLICLSGLALVAVAC) threads the bilayer. The Periplasmic segment spans residues 119-123 (HTLAD). A helical transmembrane segment spans residues 124–144 (FVGFLILGGLSIIAAITYTVG). The Cytoplasmic segment spans residues 145–148 (NRPY). Residues 149 to 169 (GYIGLGDISVLVFFGWLSVMG) traverse the membrane as a helical segment. The Periplasmic segment spans residues 170-176 (SWYLQAH). Residues 177-197 (TLIPALILPATACGLLATAVL) traverse the membrane as a helical segment. Topologically, residues 198 to 227 (NINNLRDINSDRENGKNTLVVRLGEVNARR) are cytoplasmic. A helical membrane pass occupies residues 228–247 (YHACLLMGSLVCLALFNLFS). Residues 248–250 (LHS) are Periplasmic-facing. Residues 251–270 (LWGWLFLLAAPLLVKQARYV) traverse the membrane as a helical segment. Topologically, residues 271-286 (MREMDPVAMRPMLERT) are cytoplasmic. A helical transmembrane segment spans residues 287 to 307 (VKGALLTNLLFVLGIFLSQWA). A topological domain (periplasmic) is located at residue Ala308.

It belongs to the MenA family. Type 1 subfamily.

The protein localises to the cell inner membrane. It catalyses the reaction an all-trans-polyprenyl diphosphate + 1,4-dihydroxy-2-naphthoate + H(+) = a 2-demethylmenaquinol + CO2 + diphosphate. It functions in the pathway quinol/quinone metabolism; menaquinone biosynthesis; menaquinol from 1,4-dihydroxy-2-naphthoate: step 1/2. Functionally, conversion of 1,4-dihydroxy-2-naphthoate (DHNA) to demethylmenaquinone (DMK). Attaches octaprenylpyrophosphate, a membrane-bound 40-carbon side chain to DHNA. The conversion of DHNA to DMK proceeds in three stages: the removal of the carboxyl group of DHNA as CO(2), the attachment of the isoprenoid side chain, and a quinol-to-quinone oxidation, which is thought to be spontaneous. This chain is 1,4-dihydroxy-2-naphthoate octaprenyltransferase, found in Escherichia coli (strain K12).